Consider the following 60-residue polypeptide: Large ribosomal subunit protein uL30 (60 aa).

This sequence belongs to the universal ribosomal protein uL30 family. In terms of assembly, part of the 50S ribosomal subunit.

This Shewanella loihica (strain ATCC BAA-1088 / PV-4) protein is Large ribosomal subunit protein uL30.